The primary structure comprises 94 residues: Mitochondrial import receptor subunit TOM9-1 (94 aa).

Residues 1–48 (MAPKKIGAGKGDSSILAKISNYDIVSQGRRAACDAVYVSKKLLKSTGK) lie on the Cytoplasmic side of the membrane. Residues 49 to 66 (AAWIAGTTFLILAVPLIL) form a helical membrane-spanning segment. Over 67–94 (ELEQDHRLGEIDFEQASLLGTPPVGAML) the chain is Mitochondrial intermembrane.

It belongs to the Tom22 family. In terms of assembly, forms part of the preprotein translocase complex of the outer mitochondrial membrane (TOM complex) which consists of at least 6 different proteins (TOM5, TOM6, TOM7, TOM20, TOM22/TOM9 and TOM40). Expressed in roots, flowers, young cotyledons and leaves.

The protein localises to the mitochondrion outer membrane. In terms of biological role, central component of the receptor complex responsible for the recognition and translocation of cytosolically synthesized mitochondrial preproteins. Together with TOM20 functions as the transit peptide receptor at the surface of the mitochondrion outer membrane and facilitates the movement of preproteins into the translocation pore. This Arabidopsis thaliana (Mouse-ear cress) protein is Mitochondrial import receptor subunit TOM9-1 (TOM9-1).